Here is a 122-residue protein sequence, read N- to C-terminus: Large ribosomal subunit protein eL18 (122 aa).

The protein belongs to the eukaryotic ribosomal protein eL18 family.

The polypeptide is Large ribosomal subunit protein eL18 (Thermoplasma volcanium (strain ATCC 51530 / DSM 4299 / JCM 9571 / NBRC 15438 / GSS1)).